The following is a 441-amino-acid chain: MKERSTELVQGFRHSVPYINAHRGKTFVVMLGGEAIEHENFANIVNDIGLLHSLGIRLVVVYGARPQIDVNLAQHNLEPIYHKHTRVTDAHTLELVKQAAGLLQLDITARLSMSLNNTPLQGAHINVVSGNFIIAQPLGIDDGVDYCHSGRIRRIDEEAIHRQLDSNAIVLIGPVAVSVTGESFNLTSEEVATQLAVKLKAEKMIGFCSSQGVTNQEGTIISELFPNDAQKRIEELEEHGDYHSGTVRFLRGAVKACRSGVRRSHLISYQEDGALVQELFSRDGIGTQIVMESAEQVRRATINDIGGILELIRPLEQQGILVRRSREQLEMEIDKFTIIERDNLTIACAALYPFPEEKIGEMACVAVHPDYRSSSRGEMLLQRVESQARQMGLRKLFVLTTRSIHWFQERGFTPAEVDVLPVEKQALYNYQRRSKILLADL.

The region spanning Glu295–Ser434 is the N-acetyltransferase domain.

Belongs to the acetyltransferase family. ArgA subfamily. As to quaternary structure, homohexamer.

It localises to the cytoplasm. It catalyses the reaction L-glutamate + acetyl-CoA = N-acetyl-L-glutamate + CoA + H(+). The protein operates within amino-acid biosynthesis; L-arginine biosynthesis; N(2)-acetyl-L-ornithine from L-glutamate: step 1/4. The polypeptide is Amino-acid acetyltransferase (Serratia proteamaculans (strain 568)).